Consider the following 339-residue polypeptide: Uroporphyrinogen decarboxylase (339 aa).

Residues 21–25, Phe40, Asp71, Tyr147, Ser202, and His315 contribute to the substrate site; that span reads RQAGR.

It belongs to the uroporphyrinogen decarboxylase family. Homodimer.

Its subcellular location is the cytoplasm. It carries out the reaction uroporphyrinogen III + 4 H(+) = coproporphyrinogen III + 4 CO2. The protein operates within porphyrin-containing compound metabolism; protoporphyrin-IX biosynthesis; coproporphyrinogen-III from 5-aminolevulinate: step 4/4. Its function is as follows. Catalyzes the decarboxylation of four acetate groups of uroporphyrinogen-III to yield coproporphyrinogen-III. This Helicobacter pylori (strain ATCC 700392 / 26695) (Campylobacter pylori) protein is Uroporphyrinogen decarboxylase.